The following is a 157-amino-acid chain: Small ribosomal subunit protein uS7 (157 aa).

It belongs to the universal ribosomal protein uS7 family. As to quaternary structure, part of the 30S ribosomal subunit. Contacts proteins S9 and S11.

One of the primary rRNA binding proteins, it binds directly to 16S rRNA where it nucleates assembly of the head domain of the 30S subunit. Is located at the subunit interface close to the decoding center, probably blocks exit of the E-site tRNA. This chain is Small ribosomal subunit protein uS7, found in Roseiflexus sp. (strain RS-1).